The primary structure comprises 301 residues: D-alanine--D-alanine ligase (301 aa).

The ATP-grasp domain occupies 99–294; it reads KCILKAANIR…FPELIDMIID (196 aa). Position 126–181 (126–181) interacts with ATP; that stretch reads IEKMGYPVVVKPTHGGSSVATFIIKEEKDIKDAVIEGFKWDSEVIIEKFIKGDEIT. Mg(2+) contacts are provided by Asp248, Glu261, and Asn263.

This sequence belongs to the D-alanine--D-alanine ligase family. The cofactor is Mg(2+). It depends on Mn(2+) as a cofactor.

The protein resides in the cytoplasm. It catalyses the reaction 2 D-alanine + ATP = D-alanyl-D-alanine + ADP + phosphate + H(+). The protein operates within cell wall biogenesis; peptidoglycan biosynthesis. Cell wall formation. The protein is D-alanine--D-alanine ligase of Clostridium botulinum (strain Alaska E43 / Type E3).